We begin with the raw amino-acid sequence, 504 residues long: Protein FMP42 (504 aa).

Residues 1–11 are Vacuolar-facing; the sequence is MTSTRTLRYAQ. Residues 12–32 traverse the membrane as a helical segment; that stretch reads VACACIWCLFSAGIIFGFAAL. Residues 33–64 are Cytoplasmic-facing; the sequence is KPILISEGVYHELCDPKDGDRLLCTAQDLKLN. A helical transmembrane segment spans residues 65–85; the sequence is FIFALSATVTNIMALPVGKIL. Over 86-91 the chain is Vacuolar; that stretch reads DMYGPR. The helical transmembrane segment at 92-112 threads the bilayer; that stretch reads VCGIIGSCLLFLASGNFISAK. Over 113 to 119 the chain is Cytoplasmic; the sequence is HLVSLWD. A helical membrane pass occupies residues 120–140; it reads PYLVGYTLLAVAGPFVFISCF. The Vacuolar portion of the chain corresponds to 141–150; sequence QLANSFPQRS. The chain crosses the membrane as a helical span at residues 151–171; it reads GTVLALLTGSFDSSSALFLLY. Topologically, residues 172-186 are cytoplasmic; sequence RLLYQNWFPTLNVSR. The helical transmembrane segment at 187-207 threads the bilayer; sequence FFTLYLIVPVFILACQLTIMP. The Vacuolar segment spans residues 208–302; it reads HSSYKTVNHI…KSAYEQIKSP (95 aa). Serine 238, serine 249, and serine 269 each carry phosphoserine. Residues 303-323 form a helical membrane-spanning segment; that stretch reads WFYLMLLFALVAMLRINYFIA. Topologically, residues 324–344 are cytoplasmic; the sequence is TVRTQEEYLLNDPDLALKLNS. Residues 345 to 365 form a helical membrane-spanning segment; sequence IFDMLLPLGGAVSIPFIGLLL. Residues 366–385 lie on the Vacuolar side of the membrane; it reads DHTDTLSTLTILFTTSTAIG. A helical transmembrane segment spans residues 386-406; the sequence is VFGLIPNSFTWNLIGIVLLVV. Residues 407–421 are Cytoplasmic-facing; that stretch reads YRPFYYTVVSDYSSK. Residues 422 to 442 traverse the membrane as a helical segment; the sequence is VFGFDTFGTVYGLLSCICGIF. The Vacuolar segment spans residues 443 to 462; sequence NMSQNLLDKWTHTTFNMNPF. A helical membrane pass occupies residues 463 to 483; sequence PINLTLVILTVVFSLTLTFYI. The Cytoplasmic segment spans residues 484-504; the sequence is RSQILPKPVNERGLSSNYQTI.

It belongs to the SLC43A transporter (TC 2.A.1.44) family.

The protein localises to the vacuole membrane. This chain is Protein FMP42 (FMP42), found in Saccharomyces cerevisiae (strain ATCC 204508 / S288c) (Baker's yeast).